Here is a 496-residue protein sequence, read N- to C-terminus: Probable CtpA-like serine protease (496 aa).

Residues 1 to 16 (MDDKQHTTSSDDERAE) show a composition bias toward basic and acidic residues. The disordered stretch occupies residues 1–27 (MDDKQHTTSSDDERAENATSNQDQQTN). The segment covering 17–27 (NATSNQDQQTN) has biased composition (polar residues). The helical transmembrane segment at 39–59 (FISILIGTIIITAVITVVAYI) threads the bilayer. Residues 124–206 (TKSFNEGVSG…TEVTLTVQRG (83 aa)) form the PDZ domain. Catalysis depends on charge relay system residues serine 329, aspartate 340, and lysine 354.

The protein belongs to the peptidase S41A family.

Its subcellular location is the cell membrane. The chain is Probable CtpA-like serine protease from Staphylococcus aureus (strain MRSA252).